Here is a 224-residue protein sequence, read N- to C-terminus: uncharacterized protein (224 aa).

Functionally, the presence of the two linear plasmids, termed pGKL1 and pGKL2, in strains of Kluyveromyces lactis confers the killer phenotype to the host cell, by promoting the secretion of a toxin able to inhibit the growth of sensitive strains. This is an uncharacterized protein from Kluyveromyces lactis (strain ATCC 8585 / CBS 2359 / DSM 70799 / NBRC 1267 / NRRL Y-1140 / WM37) (Yeast).